Reading from the N-terminus, the 396-residue chain is Acetate kinase (396 aa).

Asn-8 lines the Mg(2+) pocket. Lys-15 contacts ATP. Arg-90 is a binding site for substrate. Catalysis depends on Asp-147, which acts as the Proton donor/acceptor. ATP is bound by residues 207–211 (HLGSG), 283–285 (DMR), and 330–334 (GIGEN). A Mg(2+)-binding site is contributed by Glu-384.

The protein belongs to the acetokinase family. In terms of assembly, homodimer. Mg(2+) is required as a cofactor. Requires Mn(2+) as cofactor.

It localises to the cytoplasm. It carries out the reaction acetate + ATP = acetyl phosphate + ADP. It functions in the pathway metabolic intermediate biosynthesis; acetyl-CoA biosynthesis; acetyl-CoA from acetate: step 1/2. Catalyzes the formation of acetyl phosphate from acetate and ATP. Can also catalyze the reverse reaction. The protein is Acetate kinase of Lacticaseibacillus paracasei (strain ATCC 334 / BCRC 17002 / CCUG 31169 / CIP 107868 / KCTC 3260 / NRRL B-441) (Lactobacillus paracasei).